A 402-amino-acid polypeptide reads, in one-letter code: Endoglucanase 1 (402 aa).

Position 1 is a pyrrolidone carboxylic acid (glutamine 1). 3 disulfides stabilise this stretch: cysteine 18–cysteine 24, cysteine 51–cysteine 73, and cysteine 63–cysteine 69. Asparagine 89 is a glycosylation site (N-linked (GlcNAc...) asparagine). Intrachain disulfides connect cysteine 140/cysteine 365, cysteine 172/cysteine 195, cysteine 176/cysteine 194, cysteine 215/cysteine 234, cysteine 223/cysteine 228, and cysteine 239/cysteine 315. Glutamate 197 serves as the catalytic Nucleophile. The active-site Proton donor is glutamate 202. Asparagine 247 carries an N-linked (GlcNAc...) asparagine glycan.

It belongs to the glycosyl hydrolase 7 (cellulase C) family. In terms of assembly, monomer.

The protein localises to the secreted. The catalysed reaction is Endohydrolysis of (1-&gt;4)-beta-D-glucosidic linkages in cellulose, lichenin and cereal beta-D-glucans.. Its function is as follows. The biological conversion of cellulose to glucose generally requires three types of hydrolytic enzymes: (1) Endoglucanases which cut internal beta-1,4-glucosidic bonds; (2) Exocellobiohydrolases that cut the disaccharide cellobiose from the non-reducing end of the cellulose polymer chain; (3) Beta-1,4-glucosidases which hydrolyze the cellobiose and other short cello-oligosaccharides to glucose. This is Endoglucanase 1 (CEL7B) from Humicola insolens (Soft-rot fungus).